An 822-amino-acid chain; its full sequence is Cation/H(+) antiporter 3 (822 aa).

A run of 12 helical transmembrane segments spans residues Phe55–Phe75, Glu116–Val136, Ala150–Phe170, Tyr190–Phe210, Ile224–Met244, Ile274–Ile294, Ala305–Cys325, Met331–Ile351, Phe362–Trp382, Ile388–Leu408, Phe418–Ala438, and Glu447–Leu467.

This sequence belongs to the monovalent cation:proton antiporter 2 (CPA2) transporter (TC 2.A.37) family. CHX (TC 2.A.37.4) subfamily.

It localises to the membrane. Functionally, may operate as a cation/H(+) antiporter. This is Cation/H(+) antiporter 3 (CHX3) from Arabidopsis thaliana (Mouse-ear cress).